Consider the following 395-residue polypeptide: THP3 homolog C2A9.11c (395 aa).

A disordered region spans residues 91–127 (LLSEEDEVDKKEKRRRRFENGSRSQNNAKSEELKVNP). The PCI domain occupies 218-384 (DVGEYNQCQT…STDRFEKCMK (167 aa)).

The protein belongs to the THP3 family.

It is found in the cytoplasm. It localises to the nucleus. Its function is as follows. Required for transcription elongation. May also be involved in pre-mRNA splicing. In Schizosaccharomyces pombe (strain 972 / ATCC 24843) (Fission yeast), this protein is THP3 homolog C2A9.11c.